Reading from the N-terminus, the 375-residue chain is AT-rich binding protein (375 aa).

The C2H2-type 1 zinc finger occupies 29–52 (IVCHTCQEELQTQDQFWKHIQDEH). Over residues 110–119 (DDQREMDIHE) the composition is skewed to basic and acidic residues. The disordered stretch occupies residues 110-142 (DDQREMDIHEAQQQQHQQQQQHQQQQQLQQQQQ). Residues 121–142 (QQQQHQQQQQHQQQQQLQQQQQ) are compositionally biased toward low complexity. C2H2-type zinc fingers lie at residues 308–332 (YICD…RVVH) and 338–361 (FNCE…KKKH).

It is found in the nucleus. May be a transcription factor for genes having (A+T) stretches in their promoter and/or enhancer regions. Binds to AT rich DNA. This Drosophila pseudoobscura pseudoobscura (Fruit fly) protein is AT-rich binding protein.